Consider the following 195-residue polypeptide: dITP/XTP pyrophosphatase (195 aa).

Residue 8–13 (SNNQGK) coordinates substrate. 2 residues coordinate Mg(2+): E39 and D68. The active-site Proton acceptor is the D68. Substrate-binding positions include S69, 149-152 (FGYD), K172, and 177-178 (HR).

It belongs to the HAM1 NTPase family. In terms of assembly, homodimer. Mg(2+) is required as a cofactor.

The catalysed reaction is XTP + H2O = XMP + diphosphate + H(+). It carries out the reaction dITP + H2O = dIMP + diphosphate + H(+). It catalyses the reaction ITP + H2O = IMP + diphosphate + H(+). Its function is as follows. Pyrophosphatase that catalyzes the hydrolysis of nucleoside triphosphates to their monophosphate derivatives, with a high preference for the non-canonical purine nucleotides XTP (xanthosine triphosphate), dITP (deoxyinosine triphosphate) and ITP. Seems to function as a house-cleaning enzyme that removes non-canonical purine nucleotides from the nucleotide pool, thus preventing their incorporation into DNA/RNA and avoiding chromosomal lesions. The sequence is that of dITP/XTP pyrophosphatase from Staphylococcus aureus (strain Mu50 / ATCC 700699).